We begin with the raw amino-acid sequence, 425 residues long: Pleckstrin homology domain-containing family A member 2 (425 aa).

The 107-residue stretch at 7–113 (QNRICGFLDI…WVEALNQASK (107 aa)) folds into the PH 1 domain. A Glycyl lysine isopeptide (Lys-Gly) (interchain with G-Cter in SUMO2) cross-link involves residue Lys141. Position 184 is a phosphoserine (Ser184). The PH 2 domain occupies 198–298 (PLIKSGYCVK…WIKEIGAAVQ (101 aa)). A phosphoserine mark is found at Ser314 and Ser349. Positions 374 to 410 (AEDSLFTPRLGESSTSAVLPSSRIRHRSEPQHPKEKP) are disordered. Basic and acidic residues predominate over residues 400–410 (RSEPQHPKEKP).

Binds MPDZ and PTPN13.

It localises to the cytoplasm. It is found in the cell membrane. Its subcellular location is the nucleus. Functionally, binds specifically to phosphatidylinositol 3,4-diphosphate (PtdIns3,4P2), but not to other phosphoinositides. May recruit other proteins to the plasma membrane. The chain is Pleckstrin homology domain-containing family A member 2 (PLEKHA2) from Bos taurus (Bovine).